Here is a 23-residue protein sequence, read N- to C-terminus: PAWLVDCPCVGDDVNRLLTRGER.

Residue Pro1 is a propeptide. A cross-link (cyclopeptide (Ala-Pro)) is located at residues 2–8 (AWLVDCP). Residues 3–7 (WLVDC) constitute a cross-link (2'-cysteinyl-6'-hydroxytryptophan sulfoxide (Trp-Cys)). Positions 9–23 (CVGDDVNRLLTRGER) are excised as a propeptide.

Belongs to the MSDIN fungal toxin family. Processed by the macrocyclase-peptidase enzyme POPB to yield a toxic cyclic heptapeptide. POPB first removes 10 residues from the N-terminus. Conformational trapping of the remaining peptide forces the enzyme to release this intermediate rather than proceed to macrocyclization. The enzyme rebinds the remaining peptide in a different conformation and catalyzes macrocyclization of the N-terminal 7 residues.

Its function is as follows. Toxin that belongs to the bicyclic heptapeptides called phallotoxins. Although structurally related to amatoxins, phallotoxins have a different mode of action, which is the stabilization of F-actin. Phallotoxins are poisonous when administered parenterally, but not orally because of poor absorption. The sequence is that of Phallacidin proprotein 1 from Amanita exitialis (Guangzhou destroying angel).